Reading from the N-terminus, the 937-residue chain is Protein translocase subunit SecA (937 aa).

Residues Gln86, 104 to 108 (GEGKT), and Asp493 contribute to the ATP site. A disordered region spans residues 868-889 (LERPSQPTKLAYSAPSEDGDAE). Residues Cys911, Cys913, Cys922, and His923 each coordinate Zn(2+). Positions 915–937 (SGKKFKQCHGRPGGPTGLTARVS) are disordered.

It belongs to the SecA family. In terms of assembly, monomer and homodimer. Part of the essential Sec protein translocation apparatus which comprises SecA, SecYEG and auxiliary proteins SecDF. Other proteins may also be involved. Zn(2+) is required as a cofactor.

It is found in the cell membrane. The protein resides in the cytoplasm. The enzyme catalyses ATP + H2O + cellular proteinSide 1 = ADP + phosphate + cellular proteinSide 2.. Functionally, part of the Sec protein translocase complex. Interacts with the SecYEG preprotein conducting channel. Has a central role in coupling the hydrolysis of ATP to the transfer of proteins into and across the cell membrane, serving as an ATP-driven molecular motor driving the stepwise translocation of polypeptide chains across the membrane. In Nocardioides sp. (strain ATCC BAA-499 / JS614), this protein is Protein translocase subunit SecA.